The sequence spans 98 residues: NADH-ubiquinone oxidoreductase chain 4L (98 aa).

3 helical membrane-spanning segments follow: residues 1–21 (MPVV…GLLI), 29–49 (SLLC…VTVL), and 61–81 (IILL…LVMV).

Belongs to the complex I subunit 4L family. Core subunit of respiratory chain NADH dehydrogenase (Complex I) which is composed of 45 different subunits.

It is found in the mitochondrion inner membrane. The enzyme catalyses a ubiquinone + NADH + 5 H(+)(in) = a ubiquinol + NAD(+) + 4 H(+)(out). Functionally, core subunit of the mitochondrial membrane respiratory chain NADH dehydrogenase (Complex I) which catalyzes electron transfer from NADH through the respiratory chain, using ubiquinone as an electron acceptor. Part of the enzyme membrane arm which is embedded in the lipid bilayer and involved in proton translocation. The chain is NADH-ubiquinone oxidoreductase chain 4L (MT-ND4L) from Helarctos malayanus (Malayan sun bear).